Consider the following 559-residue polypeptide: ATP-dependent RNA helicase HAS1 (559 aa).

A disordered region spans residues 1–90 (MAPRSQSKSQ…TSEAEADEPG (90 aa)). Basic and acidic residues-rich tracts occupy residues 9–22 (SQRE…REDA) and 55–75 (PDQK…ELTK). The Q motif signature appears at 93-121 (YSFEKADFSEPTMKAIKEMGFQKMTKVQA). Positions 124–300 (IPPLLAGRDV…RISLRPGPLY (177 aa)) constitute a Helicase ATP-binding domain. ATP is bound at residue 137–144 (AKTGSGKT). A DEAD box motif is present at residues 247–250 (DEAD). One can recognise a Helicase C-terminal domain in the interval 314 to 484 (GLEQGYVVCD…NVQSQLTKLI (171 aa)).

Belongs to the DEAD box helicase family. DDX18/HAS1 subfamily. In terms of assembly, associates in the nucleolus with the 60S and pre-60S ribosomal subunits.

It localises to the nucleus. The protein resides in the nucleolus. The enzyme catalyses ATP + H2O = ADP + phosphate + H(+). Its function is as follows. ATP-dependent RNA helicase involved in 40S ribosomal subunit biogenesis. Required for the processing and cleavage of 35S pre-rRNA at sites A0, A1, and A2, leading to mature 18S rRNA. The sequence is that of ATP-dependent RNA helicase HAS1 (HAS1) from Lodderomyces elongisporus (strain ATCC 11503 / CBS 2605 / JCM 1781 / NBRC 1676 / NRRL YB-4239) (Yeast).